Here is a 452-residue protein sequence, read N- to C-terminus: Probable hexaprenyl pyrophosphate synthase, mitochondrial (452 aa).

Isopentenyl diphosphate-binding residues include Lys-108, Arg-111, and His-204. Mg(2+)-binding residues include Asp-211 and Asp-215. Arg-220 is a binding site for an all-trans-polyprenyl diphosphate. Arg-221 is an isopentenyl diphosphate binding site. Positions 303, 304, 341, and 358 each coordinate an all-trans-polyprenyl diphosphate.

Belongs to the FPP/GGPP synthase family. Requires Mg(2+) as cofactor.

The protein localises to the mitochondrion. The protein operates within cofactor biosynthesis; ubiquinone biosynthesis. In terms of biological role, assembly of polyisoprenoid side chains. The polyprenyl synthase of coenzyme Q biosynthesis catalyzes the formation from isopentenyl diphosphate of all trans-polyprenyl pyrophosphates generally ranging in length of between 6 and 10 isoprene units depending on the species. This chain is Probable hexaprenyl pyrophosphate synthase, mitochondrial (COQ1), found in Yarrowia lipolytica (strain CLIB 122 / E 150) (Yeast).